A 161-amino-acid chain; its full sequence is Cyclic pyranopterin monophosphate synthase (161 aa).

Substrate is bound by residues 75–77 (LCH) and 113–114 (ME). The active site involves Asp128.

It belongs to the MoaC family. In terms of assembly, homohexamer; trimer of dimers.

The catalysed reaction is (8S)-3',8-cyclo-7,8-dihydroguanosine 5'-triphosphate = cyclic pyranopterin phosphate + diphosphate. Its pathway is cofactor biosynthesis; molybdopterin biosynthesis. Its function is as follows. Catalyzes the conversion of (8S)-3',8-cyclo-7,8-dihydroguanosine 5'-triphosphate to cyclic pyranopterin monophosphate (cPMP). The protein is Cyclic pyranopterin monophosphate synthase of Salmonella arizonae (strain ATCC BAA-731 / CDC346-86 / RSK2980).